Here is a 965-residue protein sequence, read N- to C-terminus: Collagenase ColQ1 (965 aa).

Residues 1–30 form the signal peptide; it reads MNKKSKINKVMLSISTMALSLGALQAPASA. A propeptide spanning residues 31 to 93 is cleaved from the precursor; that stretch reads EEKVPYNVLK…KAAVKQVKES (63 aa). Residues 94–366 form an activator domain region; that stretch reads YSMADLNKMN…AVEQITTNYN (273 aa). The interval 94-765 is S1 metalloprotease domain; sequence YSMADLNKMN…VFHGIAKDDG (672 aa). A catalytic subdomain region spans residues 376–645; it reads DLEKIRKEGK…MQQLIDNQDK (270 aa). His-501 contributes to the Zn(2+) binding site. Glu-502 is a catalytic residue. Residues His-505 and Glu-533 each contribute to the Zn(2+) site. The interval 653 to 765 is helper subdomain; it reads DDYLAEHAPK…VFHGIAKDDG (113 aa). A PKD domain is found at 769–850; it reads APTVNINGPY…ESKSETTVTV (82 aa). Positions 842-867 are disordered; sequence SKSETTVTVKDGSLTESEPNNRPEEA. Over residues 845-859 the composition is skewed to polar residues; that stretch reads ETTVTVKDGSLTESE. Residues 853-965 are collagen-binding domain; sequence GSLTESEPNN…GDGTYKLSVK (113 aa).

This sequence belongs to the peptidase M9B family. Collagenase subfamily. Requires Ca(2+) as cofactor. Zn(2+) serves as cofactor.

The protein resides in the secreted. It catalyses the reaction Digestion of native collagen in the triple helical region at Xaa-|-Gly bonds. With synthetic peptides, a preference is shown for Gly at P3 and P1', Pro and Ala at P2 and P2', and hydroxyproline, Ala or Arg at P3'.. Its activity is regulated as follows. Strongly inhibited by EDTA. Not inhibited by E-64 and PMSF, broad-spectrum cysteine and serine protease inhibitors. Acts as a true collagenase, which is highly active and cleaves natively folded collagen. In vitro, can also cleave gelatin and the synthetic peptide FALGPA (furylacryloyl-Leu-Gly-Pro-Ala). Causes damage on dermal collagen (COL), resulting in gaps in the tissue, which might lead to an accelerated bacterial infiltration and penetration into deeper sites of the host. This is Collagenase ColQ1 from Bacillus cereus (strain Q1).